Here is a 578-residue protein sequence, read N- to C-terminus: MKVYCGYIGEEHLEKNVILNGWVKKVRKMGNLVFVDLKDRFGIVQIFATKSDGVFNELTQLSREDVINVEGLVLLRKNPNNDLKTGRFEIHVKKILIYSKAKTPPLIIEDETDANEEIRFRYRYLDLRRDVNLKIFELRSKVYQAFRNYLYSQDFIETETPILAKPTPEGARDFYVPTRTRKFYALPQSPQTFKQLLMVAGFQKYFQITKCFRDEDLRSDRQPEFTQVDIELSFADEIEIQTLIENLLKYVFKQTINVDLTTPFMRMSYEQAINDYGSDKPDLRFDLKIKTLNTYFENSKTLFFQKALLNNQSIRAILVPNINLNKKQVQTLEKFAKDKGAKGLSWISIKDEKIIDGSLLSIQEDHIIYKTIFKDFNLSTGSILLVADTFDIASQALGLVRINLASILNLKKPNIFKFVWIIDWPLYEYDNEAQRFVAAHHPFTMPTLETLNTFDVNKKDARGRSYDIVLNGYELGGGSVRIIDQQIQRRMFKSINMSDEEANLKFGFLLTAFEYGVPPHCGIALGLDRLMMILVNSEYIRDVVAFPKNNNGVDMMLDAPSNMNDEDLKELGLKIKND.

An L-aspartate-binding site is contributed by glutamate 169. The aspartate stretch occupies residues 191-194 (QTFK). Arginine 213 is a binding site for L-aspartate. ATP contacts are provided by residues 213-215 (RDE) and glutamine 222. Position 440 (histidine 440) interacts with L-aspartate. Glutamate 474 lines the ATP pocket. Arginine 481 contacts L-aspartate. ATP is bound at residue 526–529 (GLDR).

This sequence belongs to the class-II aminoacyl-tRNA synthetase family. Type 1 subfamily. As to quaternary structure, homodimer.

The protein localises to the cytoplasm. The catalysed reaction is tRNA(Asp) + L-aspartate + ATP = L-aspartyl-tRNA(Asp) + AMP + diphosphate. Catalyzes the attachment of L-aspartate to tRNA(Asp) in a two-step reaction: L-aspartate is first activated by ATP to form Asp-AMP and then transferred to the acceptor end of tRNA(Asp). In Ureaplasma parvum serovar 3 (strain ATCC 700970), this protein is Aspartate--tRNA ligase.